A 129-amino-acid chain; its full sequence is MARDRRPAKKKVSKNIAAGVAHVNSSFNNTKILISDVQGNAIAWSSAGTMGFKGSRKSTPFAAQMAAEDAGKKAQDHGVRTLEVEVQGPGSGRESALRALAALGFQISSIRDVTPMAHNGCRPPKRRRV.

This sequence belongs to the universal ribosomal protein uS11 family. As to quaternary structure, part of the 30S ribosomal subunit. Interacts with proteins S7 and S18. Binds to IF-3.

Located on the platform of the 30S subunit, it bridges several disparate RNA helices of the 16S rRNA. Forms part of the Shine-Dalgarno cleft in the 70S ribosome. This is Small ribosomal subunit protein uS11 from Jannaschia sp. (strain CCS1).